The following is a 323-amino-acid chain: Elongation factor P--(R)-beta-lysine ligase (323 aa).

A substrate-binding site is contributed by Ser76–Glu78. Residues Arg100–Glu102 and Asn109 contribute to the ATP site. Tyr118 contributes to the substrate binding site. Position 242–243 (Glu242–Leu243) interacts with ATP. Residue Glu249 participates in substrate binding. Position 298 (Gly298) interacts with ATP.

Belongs to the class-II aminoacyl-tRNA synthetase family. EpmA subfamily. Homodimer.

It catalyses the reaction D-beta-lysine + L-lysyl-[protein] + ATP = N(6)-((3R)-3,6-diaminohexanoyl)-L-lysyl-[protein] + AMP + diphosphate + H(+). Its function is as follows. With EpmB is involved in the beta-lysylation step of the post-translational modification of translation elongation factor P (EF-P). Catalyzes the ATP-dependent activation of (R)-beta-lysine produced by EpmB, forming a lysyl-adenylate, from which the beta-lysyl moiety is then transferred to the epsilon-amino group of a conserved specific lysine residue in EF-P. The chain is Elongation factor P--(R)-beta-lysine ligase from Histophilus somni (strain 129Pt) (Haemophilus somnus).